A 75-amino-acid polypeptide reads, in one-letter code: MSRFCQVTGKRSVSGNNRSYAMNATKRRFLPNLHFHRFWIEAEKRFIKIRVSAKGMRVIDKKGIENCLANLCIRY.

Belongs to the bacterial ribosomal protein bL28 family.

The protein is Large ribosomal subunit protein bL28 of Baumannia cicadellinicola subsp. Homalodisca coagulata.